A 378-amino-acid chain; its full sequence is Inner membrane protein YibH (378 aa).

Residues 1–3 are Periplasmic-facing; sequence MDL. A helical transmembrane segment spans residues 4–24; it reads LIVLTYVALAWAVFKIFRIPV. The Cytoplasmic portion of the chain corresponds to 25–26; it reads NQ. Residues 27-47 form a helical membrane-spanning segment; the sequence is WTLATAALGGVFLVSGLILLM. Topologically, residues 48–54 are periplasmic; it reads NYNHPYT. A helical membrane pass occupies residues 55 to 75; sequence FTAQKAVIAIPITPQVTGIVT. The Cytoplasmic portion of the chain corresponds to 76 to 232; that stretch reads EVTDKNNQLI…RAPSNGYVTQ (157 aa). Residues 233 to 253 traverse the membrane as a helical segment; it reads VLIRPGTYAAALPLRPVMVFI. At 254–280 the chain is on the periplasmic side; the sequence is PEQKRQIVAQFRQNSLLRLKPGDDAEV. The chain crosses the membrane as a helical span at residues 281–301; sequence VFNALPGQVFHGKLTSILPVV. At 302 to 309 the chain is on the cytoplasmic side; it reads PGGSYQAQ. A helical membrane pass occupies residues 310-330; that stretch reads GVLQSLTVVPGTDGVLGTIEL. The Periplasmic segment spans residues 331-378; the sequence is DPNDDIDALPDGIYAQVAVYSDHFSHVSVMRKVLLRMTSWMHYLYLDH.

It belongs to the membrane fusion protein (MFP) (TC 8.A.1) family.

Its subcellular location is the cell inner membrane. This chain is Inner membrane protein YibH (yibH), found in Escherichia coli O157:H7.